The sequence spans 452 residues: Glycine receptor subunit alpha-2 (452 aa).

A signal peptide spans 1–27 (MNRQLVNILTALFAFFLGTNHFREAFC). The Extracellular portion of the chain corresponds to 28-256 (KDHDSRSGKH…KFHLERQMGY (229 aa)). Residue N72 is glycosylated (N-linked (GlcNAc...) asparagine). Residue R99 participates in glycine binding. R99 is a binding site for strychnine. N103 carries an N-linked (GlcNAc...) asparagine glycan. S163 is a binding site for glycine. Residues C172 and C186 are joined by a disulfide bond. E226 and E228 together coordinate Zn(2+). C232 and C243 are joined by a disulfide. Residue T238 participates in glycine binding. H249 lines the Zn(2+) pocket. Residues 257–278 (YLIQMYIPSLLIVILSWVSFWI) traverse the membrane as a helical segment. Over 279 to 283 (NMDAA) the chain is Cytoplasmic. Residues 284–304 (PARVALGITTVLTMTTQSSGS) form a helical membrane-spanning segment. Residues 305-315 (RASLPKVSYVK) lie on the Extracellular side of the membrane. A helical membrane pass occupies residues 316–336 (AIDIWMAVCLLFVFAALLEYA). Topologically, residues 337–420 (AVNFVSRQHK…FVDRAKRIDT (84 aa)) are cytoplasmic. The helical transmembrane segment at 421 to 441 (ISRAAFPLAFLIFNIFYWITY) threads the bilayer. Residues 442–452 (KIIRHEDVHKK) lie on the Extracellular side of the membrane.

The protein belongs to the ligand-gated ion channel (TC 1.A.9) family. Glycine receptor (TC 1.A.9.3) subfamily. GLRA2 sub-subfamily. Interacts with GLRB. Heteropentamer composed of GLRA2 and GLRB; functional GLRB-GLRA2 heteropentamers contain four GLRA2 subunits and one GLRB subunit, although alternative subunit composition cannot be excluded. Homopentamer (in vitro). Both homopentamers and heteropentamers form functional ion channels, but their characteristics are subtly different.

It localises to the postsynaptic cell membrane. It is found in the synapse. The protein resides in the cell membrane. Its subcellular location is the cell projection. It catalyses the reaction chloride(in) = chloride(out). Channel opening is triggered by extracellular glycine. Channel opening is also triggered by taurine and beta-alanine. Inhibited by strychnine. Inhibited by picrotoxin. Functionally, subunit of heteromeric glycine-gated chloride channels. Plays a role in synaptic plasticity. Contributes to the generation of inhibitory postsynaptic currents, and is involved in the down-regulation of neuronal excitability. Plays a role in cellular responses to ethanol. The polypeptide is Glycine receptor subunit alpha-2 (Rattus norvegicus (Rat)).